The primary structure comprises 176 residues: 2-C-methyl-D-erythritol 2,4-cyclodiphosphate synthase (176 aa).

Residues Asp23, His25, and His60 each coordinate a divalent metal cation. Residue 23–25 (DSH) coordinates 4-CDP-2-C-methyl-D-erythritol 2-phosphate. 149-152 (TSGE) serves as a coordination point for 4-CDP-2-C-methyl-D-erythritol 2-phosphate.

It belongs to the IspF family. In terms of assembly, homotrimer. The cofactor is a divalent metal cation.

It carries out the reaction 4-CDP-2-C-methyl-D-erythritol 2-phosphate = 2-C-methyl-D-erythritol 2,4-cyclic diphosphate + CMP. It participates in isoprenoid biosynthesis; isopentenyl diphosphate biosynthesis via DXP pathway; isopentenyl diphosphate from 1-deoxy-D-xylulose 5-phosphate: step 4/6. In terms of biological role, involved in the biosynthesis of isopentenyl diphosphate (IPP) and dimethylallyl diphosphate (DMAPP), two major building blocks of isoprenoid compounds. Catalyzes the conversion of 4-diphosphocytidyl-2-C-methyl-D-erythritol 2-phosphate (CDP-ME2P) to 2-C-methyl-D-erythritol 2,4-cyclodiphosphate (ME-CPP) with a corresponding release of cytidine 5-monophosphate (CMP). In Chlamydia abortus (strain DSM 27085 / S26/3) (Chlamydophila abortus), this protein is 2-C-methyl-D-erythritol 2,4-cyclodiphosphate synthase.